The primary structure comprises 89 residues: MAHKKAGGSSRNGRDSQSKRLGVKKFGGEAVIAGNIIVRQRGTEWHPGTNVGLGKDHTIFALTAGNVNYRTKANGRVYVSVMPKAEAAE.

The disordered stretch occupies residues 1–21 (MAHKKAGGSSRNGRDSQSKRL).

Belongs to the bacterial ribosomal protein bL27 family.

The polypeptide is Large ribosomal subunit protein bL27 (Rhizobium rhizogenes (strain K84 / ATCC BAA-868) (Agrobacterium radiobacter)).